Consider the following 216-residue polypeptide: Transmembrane emp24 domain-containing protein eca (216 aa).

The signal sequence occupies residues 1-20; that stretch reads MRDQFISLALILCVLHSACG. The Lumenal portion of the chain corresponds to 21-182; it reads LYFHISETER…FRHTSESTNS (162 aa). The region spanning 30–126 is the GOLD domain; that stretch reads RKCFIEEVPD…QLRVHLDIQV (97 aa). The stretch at 134–164 forms a coiled coil; that stretch reads ANVAQKEKLTELQLRIRQLLDQVEQITKEQN. A helical transmembrane segment spans residues 183 to 203; sequence RVLWWSLAQTIVLVCMGFWQM. The Cytoplasmic segment spans residues 204 to 216; the sequence is RHLKSFFEAKKLV. Residues 213–216 carry the Prevents secretion from ER motif; it reads KKLV.

The protein belongs to the EMP24/GP25L family.

It localises to the endoplasmic reticulum membrane. Functionally, eca and bai are essential, though not redundant, for dorsoventral patterning of the embryo. Specifically required during early embryogenesis for the activity of maternal tkv, while the zygotic tkv is not affected. Involved in Golgi organization. This Drosophila sechellia (Fruit fly) protein is Transmembrane emp24 domain-containing protein eca.